Consider the following 476-residue polypeptide: Protein transport protein Sec61 subunit alpha isoform A (476 aa).

Over 2–33 the chain is Cytoplasmic; that stretch reads GIKFLEVIKPFCAVLPEIQKPERKIQFREKVL. Residues 34 to 53 form a helical membrane-spanning segment; that stretch reads WTAITLFIFLVCCQIPLFGI. Residues 54–76 lie on the Lumenal side of the membrane; sequence MSSDSADPFYWMRVILASNRGTL. The chain crosses the membrane as a helical span at residues 77 to 96; it reads MELGISPIVTSGLIMQLLAG. Residues 97 to 117 lie on the Cytoplasmic side of the membrane; the sequence is AKIIEVGDTPKDRALFNGAQK. Residues 118–138 form a helical membrane-spanning segment; the sequence is LFGMIITIGQSIVYVMTGMYG. The Lumenal portion of the chain corresponds to 139–144; that stretch reads DPSEMG. The helical transmembrane segment at 145-165 threads the bilayer; the sequence is AGICLLIIIQLFVAGLIVLLL. Residues 166–172 lie on the Cytoplasmic side of the membrane; that stretch reads DELLQKG. The helical transmembrane segment at 173 to 193 threads the bilayer; it reads YGLGSGISLFIATNICETIVW. Topologically, residues 194–240 are lumenal; sequence KAFSPTTVNTGRGTEFEGAIIALFHLLATRTDKVRALREAFYRQNLP. The helical transmembrane segment at 241-261 threads the bilayer; that stretch reads NLLNLIATVFVFAVVIYFQGF. Over 262 to 288 the chain is Cytoplasmic; it reads RVDLPIKSARYRGQYNTYPIKLFYTSN. The chain crosses the membrane as a helical span at residues 289 to 309; the sequence is IPIILQSALVSNLYVISQMLS. Residues 310–354 are Lumenal-facing; that stretch reads TRFSGNFLVNLLGTWSDTSTGGPARAYPVGGLCYFLSPPESFGSV. Residues 355-375 form a helical membrane-spanning segment; the sequence is LDDPIHAAIYIVFMLGSCAFF. Residues 376 to 420 are Cytoplasmic-facing; sequence SKTWIEVSGSSAKDVAKQLKEQQMVMGGHRETSMVHELNRYIPTA. The helical transmembrane segment at 421–441 threads the bilayer; sequence AAFGGLCIGGLSVMADFLGAI. Residues 442–445 are Lumenal-facing; it reads GSGT. Residues 446-462 form a helical membrane-spanning segment; it reads GILLAVTIIYQYFEIFV. The Cytoplasmic segment spans residues 463–476; that stretch reads KEQSEMGSMGALLF.

This sequence belongs to the SecY/SEC61-alpha family. In terms of assembly, the SEC61 channel-forming translocon complex consists of channel-forming core components SEC61A1, SEC61B and SEC61G and different auxiliary components such as SEC62 and SEC63. The SEC61 channel associates with the multi-pass translocon (MPT) complex.

The protein localises to the endoplasmic reticulum membrane. Its function is as follows. Component of SEC61 channel-forming translocon complex that mediates transport of signal peptide-containing precursor polypeptides across the endoplasmic reticulum (ER). Forms a ribosome receptor and a gated pore in the ER membrane, both functions required for cotranslational translocation of nascent polypeptides. May cooperate with auxiliary protein SEC62, SEC63 and HSPA5/BiP to enable post-translational transport of small presecretory proteins. The SEC61 channel is also involved in ER membrane insertion of transmembrane proteins: it mediates membrane insertion of the first few transmembrane segments of proteins, while insertion of subsequent transmembrane regions of multi-pass membrane proteins is mediated by the multi-pass translocon (MPT) complex. This is Protein transport protein Sec61 subunit alpha isoform A (sec61aa) from Oncorhynchus mykiss (Rainbow trout).